Reading from the N-terminus, the 588-residue chain is Solute carrier family 2, facilitated glucose transporter member 12 (588 aa).

Residues 1-28 (MLAHSTAQDLILQQRSSDDHPQTNPRQT) are Cytoplasmic-facing. The chain crosses the membrane as a helical span at residues 29-49 (GCGAFIILSSVIAAISGLLVG). Topologically, residues 50 to 74 (YELGIISGALLQLQSLLELTCQQQE) are extracellular. The helical transmembrane segment at 75–95 (IVVSALLIGALVASLVGGCLI) threads the bilayer. Residues 96–103 (DLYGRRTT) lie on the Cytoplasmic side of the membrane. The chain crosses the membrane as a helical span at residues 104–124 (IIFTSILLVFANLLPVVVVSY). Residues 125–131 (GSLIAGR) lie on the Extracellular side of the membrane. The chain crosses the membrane as a helical span at residues 132 to 152 (IFIGVSISLSAIATCVYIAEL). Residues 153–158 (SPQDKR) lie on the Cytoplasmic side of the membrane. The chain crosses the membrane as a helical span at residues 159–179 (GMLVSLNELMIVAGILLAYIC). Residues 180–191 (NYLFASVNNGWK) are Extracellular-facing. A helical membrane pass occupies residues 192–212 (YMFGLITPLAALQAVAMFFLP). The Cytoplasmic portion of the chain corresponds to 213-272 (RSPRFLIMKGYDDAAGKVLQKLRATTDINEELTAIKSSIKAEYQYKFLDLFCSRDNMRAR). Residues 273–293 (LLIGLTLSFFVQITGQPNILF) form a helical membrane-spanning segment. Over 294-311 (YASTVLKSVGFQSTEAAS) the chain is Extracellular. Residues 312 to 332 (LASTGIGVVKVVSTIPAIFLV) form a helical membrane-spanning segment. Over 333-339 (DKIGSKT) the chain is Cytoplasmic. A helical membrane pass occupies residues 340–360 (FLCIGSAVMAVSLVSVGLVSL). The Extracellular segment spans residues 361-459 (QLDVNYNNIC…IPEYMKWLCL (99 aa)). 3 N-linked (GlcNAc...) asparagine glycosylation sites follow: N377, N395, and N419. The helical transmembrane segment at 460–480 (SSLLAFVAAFSIGLGPMAWLV) threads the bilayer. At 481–492 (QSEIFPAGIKGR) the chain is on the cytoplasmic side. A helical transmembrane segment spans residues 493–513 (AFAITSSMNWGMNLLISLTFL). At 514–522 (TLTEMIGLP) the chain is on the extracellular side. Residues 523–543 (WMLFGYALMSIASLVFVIMFV) traverse the membrane as a helical segment. The Cytoplasmic portion of the chain corresponds to 544–588 (PNTKGRPLEEISKELANRSYMCNAVCHRRRSKKKLTPVALIQSPA).

Belongs to the major facilitator superfamily. Sugar transporter (TC 2.A.1.1) family. Glucose transporter subfamily.

It is found in the cell membrane. Its subcellular location is the endomembrane system. It localises to the cytoplasm. The protein resides in the perinuclear region. It catalyses the reaction D-glucose(out) = D-glucose(in). In terms of biological role, insulin-regulated facilitative glucose transporter. The polypeptide is Solute carrier family 2, facilitated glucose transporter member 12 (Xenopus laevis (African clawed frog)).